A 356-amino-acid chain; its full sequence is GATA zinc finger domain-containing protein 17 (356 aa).

Residues 91-119 (LKEFDALEASLNAELECLELQYSSDTSEL) are a coiled coil. Over residues 158-188 (TASTSTSTPTNTTTTTTTTSNSLTKNNNSAL) the composition is skewed to low complexity. Positions 158–294 (TASTSTSTPT…DITEESKVKE (137 aa)) are disordered. Residues 206–228 (SSDDEEDDQKDDQDKDDSDEDNV) show a composition bias toward acidic residues. Residues 260–284 (TAITTTTTPITTTDSNIIGTTTTTD) are compositionally biased toward low complexity. The segment at 304–331 (CYVCKVTETPYWRRGTDNGVVVDLCNEC) adopts a GATA-type zinc-finger fold.

This is GATA zinc finger domain-containing protein 17 (gtaQ) from Dictyostelium discoideum (Social amoeba).